The chain runs to 324 residues: tRNA N6-adenosine threonylcarbamoyltransferase (324 aa).

The Fe cation site is built by His107, His111, and Tyr128. Substrate is bound by residues 128-132 (YVSGG), Asp160, Gly173, Glu177, and Asn256. Position 284 (Asp284) interacts with Fe cation.

It belongs to the KAE1 / TsaD family. As to quaternary structure, monomer. Component of the KEOPS complex that consists of Kae1, Bud32, Cgi121 and Pcc1; the whole complex dimerizes. Fe(2+) serves as cofactor.

The protein resides in the cytoplasm. The enzyme catalyses L-threonylcarbamoyladenylate + adenosine(37) in tRNA = N(6)-L-threonylcarbamoyladenosine(37) in tRNA + AMP + H(+). Functionally, required for the formation of a threonylcarbamoyl group on adenosine at position 37 (t(6)A37) in tRNAs that read codons beginning with adenine. Is a component of the KEOPS complex that is probably involved in the transfer of the threonylcarbamoyl moiety of threonylcarbamoyl-AMP (TC-AMP) to the N6 group of A37. Kae1 likely plays a direct catalytic role in this reaction, but requires other protein(s) of the complex to fulfill this activity. The chain is tRNA N6-adenosine threonylcarbamoyltransferase from Methanothrix thermoacetophila (strain DSM 6194 / JCM 14653 / NBRC 101360 / PT) (Methanosaeta thermophila).